A 363-amino-acid chain; its full sequence is Mannose-1-phosphate guanyltransferase (363 aa).

It belongs to the transferase hexapeptide repeat family.

It localises to the cytoplasm. The enzyme catalyses alpha-D-mannose 1-phosphate + GTP + H(+) = GDP-alpha-D-mannose + diphosphate. It functions in the pathway nucleotide-sugar biosynthesis; GDP-alpha-D-mannose biosynthesis; GDP-alpha-D-mannose from alpha-D-mannose 1-phosphate (GTP route): step 1/1. Involved in cell wall synthesis where it is required for glycosylation. Involved in cell cycle progression through cell-size checkpoint. Required for the correct assembly of the septum. The sequence is that of Mannose-1-phosphate guanyltransferase (mpg1) from Schizosaccharomyces pombe (strain 972 / ATCC 24843) (Fission yeast).